Reading from the N-terminus, the 213-residue chain is Large ribosomal subunit protein uL1 (213 aa).

The protein belongs to the universal ribosomal protein uL1 family. In terms of assembly, part of the 50S ribosomal subunit.

Binds directly to 23S rRNA. Probably involved in E site tRNA release. In terms of biological role, protein L1 is also a translational repressor protein, it controls the translation of its operon by binding to its mRNA. This is Large ribosomal subunit protein uL1 from Methanocorpusculum labreanum (strain ATCC 43576 / DSM 4855 / Z).